Consider the following 809-residue polypeptide: PiggyBac transposable element-derived protein 1 (809 aa).

The region spanning Arg-44–Ser-126 is the SCAN box domain. A disordered region spans residues Cys-170–Pro-199. Residue Lys-218 forms a Glycyl lysine isopeptide (Lys-Gly) (interchain with G-Cter in SUMO2) linkage. The interval Lys-271–Pro-297 is disordered. Ser-360 carries the post-translational modification Phosphoserine.

This chain is PiggyBac transposable element-derived protein 1 (PGBD1), found in Homo sapiens (Human).